We begin with the raw amino-acid sequence, 424 residues long: Glutamate-1-semialdehyde 2,1-aminomutase (424 aa).

Lys-265 is modified (N6-(pyridoxal phosphate)lysine).

This sequence belongs to the class-III pyridoxal-phosphate-dependent aminotransferase family. HemL subfamily. Homodimer. The cofactor is pyridoxal 5'-phosphate.

It is found in the cytoplasm. The enzyme catalyses (S)-4-amino-5-oxopentanoate = 5-aminolevulinate. It participates in porphyrin-containing compound metabolism; protoporphyrin-IX biosynthesis; 5-aminolevulinate from L-glutamyl-tRNA(Glu): step 2/2. The protein is Glutamate-1-semialdehyde 2,1-aminomutase of Alkaliphilus oremlandii (strain OhILAs) (Clostridium oremlandii (strain OhILAs)).